We begin with the raw amino-acid sequence, 636 residues long: Nucleolin 2 (636 aa).

Disordered regions lie at residues 1–386 (MGKS…SKTL), 458–481 (ANER…SRTI), and 544–636 (SEIG…NDEE). Basic and acidic residues-rich tracts occupy residues 43 to 63 (KELI…KKVE) and 76 to 89 (EKTK…KDES). The span at 90-103 (SSEEEDDSSSDEEI) shows a compositional bias: acidic residues. Residues 104–118 (APAKKRPEPIKKAKV) are compositionally biased toward basic and acidic residues. Composition is skewed to acidic residues over residues 122–133 (SSDDDSTSDEET), 152–163 (SSDDDSSSDEET), and 182–193 (SSDDDSSSDEET). The span at 224 to 238 (TPAKKEPIVVKKDSS) shows a compositional bias: basic and acidic residues. 3 stretches are compositionally biased toward acidic residues: residues 267–278 (SSEEESSSDDEP), 299–311 (SSEE…ESDD), and 331–341 (SSDESSDESDK). Basic and acidic residues predominate over residues 342-367 (EESKDEKVTPKKKDSDVEMVDAEQKS). Over residues 368 to 383 (NAKQPKTPTNQTQGGS) the composition is skewed to polar residues. RRM domains are found at residues 384 to 460 (KTLF…LANE) and 479 to 558 (RTIY…ESRP). A compositionally biased stretch (polar residues) spans 464–481 (PRNSNPGRKGEGSQSRTI). Composition is skewed to basic and acidic residues over residues 552 to 566 (HVEE…EGRS) and 579 to 604 (RHSD…DRGA). Residues 622-636 (MESSKGTKTVFNDEE) are compositionally biased toward polar residues.

Interacts with THAL in the nucleus. As to expression, expressed at low levels in flower buds.

Its subcellular location is the nucleus. The protein localises to the nucleolus. In terms of biological role, involved in pre-rRNA processing and ribosome assembly. This Arabidopsis thaliana (Mouse-ear cress) protein is Nucleolin 2.